The primary structure comprises 999 residues: Transcription-repair-coupling factor (999 aa).

A Helicase ATP-binding domain is found at 499–656 (DLSSHRVMDR…LSQIKGISSL (158 aa)). Residue 512–519 (GDVGFGKT) participates in ATP binding. Positions 609–612 (DEEH) match the DEEH box motif. In terms of domain architecture, Helicase C-terminal spans 677–833 (LLKEIIYREL…SVAYHDLEIR (157 aa)).

In the N-terminal section; belongs to the UvrB family. This sequence in the C-terminal section; belongs to the helicase family. RecG subfamily.

It is found in the cytoplasm. Couples transcription and DNA repair by recognizing RNA polymerase (RNAP) stalled at DNA lesions. Mediates ATP-dependent release of RNAP and its truncated transcript from the DNA, and recruitment of nucleotide excision repair machinery to the damaged site. The sequence is that of Transcription-repair-coupling factor from Helicobacter pylori (strain ATCC 700392 / 26695) (Campylobacter pylori).